Reading from the N-terminus, the 471-residue chain is ATP synthase subunit beta (471 aa).

Gly-156–Thr-163 serves as a coordination point for ATP.

It belongs to the ATPase alpha/beta chains family. F-type ATPases have 2 components, CF(1) - the catalytic core - and CF(0) - the membrane proton channel. CF(1) has five subunits: alpha(3), beta(3), gamma(1), delta(1), epsilon(1). CF(0) has three main subunits: a(1), b(2) and c(9-12). The alpha and beta chains form an alternating ring which encloses part of the gamma chain. CF(1) is attached to CF(0) by a central stalk formed by the gamma and epsilon chains, while a peripheral stalk is formed by the delta and b chains.

The protein resides in the cell membrane. The catalysed reaction is ATP + H2O + 4 H(+)(in) = ADP + phosphate + 5 H(+)(out). Functionally, produces ATP from ADP in the presence of a proton gradient across the membrane. The catalytic sites are hosted primarily by the beta subunits. This chain is ATP synthase subunit beta, found in Lawsonia intracellularis (strain PHE/MN1-00).